Reading from the N-terminus, the 452-residue chain is Ribosomal L1 domain-containing protein 1 (452 aa).

Residue methionine 1 is modified to N-acetylmethionine. Glycyl lysine isopeptide (Lys-Gly) (interchain with G-Cter in SUMO2) cross-links involve residues lysine 119 and lysine 253. A coiled-coil region spans residues 277 to 350; that stretch reads LRSLRKQELK…QKVTEECEEA (74 aa). Residues 283–452 form a disordered region; sequence QELKKRKREN…DKKTKAAHSN (170 aa). The segment covering 292-301 has biased composition (basic and acidic residues); that stretch reads NAKLKKESKM. Over residues 309 to 319 the composition is skewed to polar residues; it reads ATSLLTQSGLA. Residues 330–341 are compositionally biased toward basic residues; sequence QKKKTNKAHKKQ. A phosphothreonine mark is found at threonine 334, threonine 344, threonine 360, threonine 399, and threonine 407. Basic and acidic residues predominate over residues 414-423; sequence KDVQEFRKPE. Positions 425–440 are enriched in polar residues; the sequence is SSFSTPRKSGKKASNT. Phosphothreonine is present on threonine 429. Residue lysine 432 is modified to N6-acetyllysine. Residue serine 433 is modified to Phosphoserine.

The protein belongs to the universal ribosomal protein uL1 family. Highly divergent. In terms of assembly, interacts with ING1. Interacts with KPNA7 and KPNA2.

The protein resides in the nucleus. It localises to the nucleolus. In terms of biological role, regulates cellular senescence through inhibition of PTEN translation. Acts as a pro-apoptotic regulator in response to DNA damage. This chain is Ribosomal L1 domain-containing protein 1, found in Mus musculus (Mouse).